We begin with the raw amino-acid sequence, 161 residues long: Regulator of ribonuclease activity A (161 aa).

Belongs to the RraA family. Homotrimer. Binds to both RNA-binding sites in the C-terminal region of Rne and to RhlB.

It localises to the cytoplasm. Functionally, globally modulates RNA abundance by binding to RNase E (Rne) and regulating its endonucleolytic activity. Can modulate Rne action in a substrate-dependent manner by altering the composition of the degradosome. Modulates RNA-binding and helicase activities of the degradosome. The chain is Regulator of ribonuclease activity A from Citrobacter koseri (strain ATCC BAA-895 / CDC 4225-83 / SGSC4696).